We begin with the raw amino-acid sequence, 115 residues long: UPF0212 protein MJ0068 (115 aa).

The protein belongs to the UPF0212 family.

In Methanocaldococcus jannaschii (strain ATCC 43067 / DSM 2661 / JAL-1 / JCM 10045 / NBRC 100440) (Methanococcus jannaschii), this protein is UPF0212 protein MJ0068.